Reading from the N-terminus, the 357-residue chain is 3-dehydroquinate synthase (357 aa).

NAD(+) is bound by residues 126-127, lysine 139, and lysine 148; that span reads TT. Zn(2+) is bound by residues glutamate 181, histidine 244, and histidine 261.

Belongs to the sugar phosphate cyclases superfamily. Dehydroquinate synthase family. The cofactor is Co(2+). Zn(2+) serves as cofactor. It depends on NAD(+) as a cofactor.

The protein localises to the cytoplasm. The catalysed reaction is 7-phospho-2-dehydro-3-deoxy-D-arabino-heptonate = 3-dehydroquinate + phosphate. It functions in the pathway metabolic intermediate biosynthesis; chorismate biosynthesis; chorismate from D-erythrose 4-phosphate and phosphoenolpyruvate: step 2/7. Catalyzes the conversion of 3-deoxy-D-arabino-heptulosonate 7-phosphate (DAHP) to dehydroquinate (DHQ). This is 3-dehydroquinate synthase from Solibacter usitatus (strain Ellin6076).